Here is a 140-residue protein sequence, read N- to C-terminus: UPF0251 protein Athe_2281 (140 aa).

Belongs to the UPF0251 family.

The protein is UPF0251 protein Athe_2281 of Caldicellulosiruptor bescii (strain ATCC BAA-1888 / DSM 6725 / KCTC 15123 / Z-1320) (Anaerocellum thermophilum).